A 432-amino-acid chain; its full sequence is CinA-like protein (432 aa).

It belongs to the CinA family.

The protein is CinA-like protein of Colwellia psychrerythraea (strain 34H / ATCC BAA-681) (Vibrio psychroerythus).